A 334-amino-acid polypeptide reads, in one-letter code: Trans-1,2-dihydrobenzene-1,2-diol dehydrogenase (334 aa).

The protein belongs to the Gfo/Idh/MocA family. Homodimer.

It carries out the reaction (1R,2R)-1,2-dihydrobenzene-1,2-diol + NADP(+) = catechol + NADPH + H(+). The enzyme catalyses D-xylose + NADP(+) = D-xylono-1,5-lactone + NADPH + H(+). This is Trans-1,2-dihydrobenzene-1,2-diol dehydrogenase (dhdh) from Danio rerio (Zebrafish).